The following is a 252-amino-acid chain: MADAEKNAVAEKNNAVATKEVLAEAAAILEPVGLQEEAELPAKIMEEFMRNSRKKDKLLCSQLQVVNFLQTFLAQEDTEQSPDALASEDASRQKATETKEQWKDMKATYMDHVDVIKCALSEALPQVKEAHRKYTELQKAFEQLEAKKRVLEEKLQLAQKQWVLQQKRLQNLTKISAEVKRRRKRALEKLDGSHQELETLKQQAGQEQEKLQRNQSYLQLLCSLQNKLVISEGKAEDKDVKGRALTAKSKSP.

The disordered stretch occupies residues 80 to 99 (QSPDALASEDASRQKATETK). Residues 89-99 (DASRQKATETK) are compositionally biased toward basic and acidic residues. Residues 120 to 221 (LSEALPQVKE…QRNQSYLQLL (102 aa)) adopt a coiled-coil conformation. S216 and S249 each carry phosphoserine.

Component of the KNL1 complex composed of KNL1 and ZWINT. Part of the ten-subunit outer kinetochore KMN network that includes the KNL1, MIS12 and NDC80 complexes; a bioriented kinetochore contains approximately 150 copies of the network. Interacts with the MIS12 complex subunits MIS12 DSN1, and PMF1. Interacts with the NDC80 complex subunit NDC80 during mitosis. Interacts with ZW10. Interacts with CETN3.

Its subcellular location is the nucleus. The protein localises to the chromosome. It is found in the centromere. It localises to the kinetochore. Its function is as follows. Acts as a component of the outer kinetochore KNL1 complex that serves as a docking point for spindle assembly checkpoint components and mediates microtubule-kinetochore interactions. Kinetochores, consisting of a centromere-associated inner segment and a microtubule-contacting outer segment, play a crucial role in chromosome segregation by mediating the physical connection between centromeric DNA and spindle microtubules. The outer kinetochore is made up of the ten-subunit KMN network, comprising the MIS12, NDC80 and KNL1 complexes, and auxiliary microtubule-associated components; together they connect the outer kinetochore with the inner kinetochore, bind microtubules, and mediate interactions with mitotic checkpoint proteins that delay anaphase until chromosomes are bioriented on the spindle. Targets the RZZ complex to the kinetochore at prometaphase. Recruits MAD2L1 to the kinetochore, but is not required for BUB1B localization. In addition to orienting mitotic chromosomes, it is also essential for alignment of homologous chromosomes during meiotic metaphase I. In meiosis I, required to activate the spindle assembly checkpoint at unattached kinetochores to correct erroneous kinetochore-microtubule attachments. The chain is Outer kinetochore KNL1 complex subunit ZWINT (Zwint) from Mus musculus (Mouse).